Consider the following 525-residue polypeptide: Protein MGF 505-6R (525 aa).

4 ANK repeats span residues 54–83, 129–158, 261–291, and 324–351; these read SIND…NLHY, ACDF…LLNV, NIHR…APNT, and KKLV…NLVD.

It belongs to the asfivirus MGF 505 family.

In terms of biological role, plays a role in virus cell tropism, and may be required for efficient virus replication in macrophages. The sequence is that of Protein MGF 505-6R from Ornithodoros (relapsing fever ticks).